A 134-amino-acid chain; its full sequence is Profilin-5 (134 aa).

It belongs to the profilin family. Occurs in many kinds of cells as a complex with monomeric actin in a 1:1 ratio. In terms of tissue distribution, specifically expressed in mature pollen grains. Expressed in germinating pollen grains. Expressed in growing pollen tubes (at protein level).

The protein localises to the cytoplasm. It is found in the cytoskeleton. Binds to actin monomers and regulates the organization of the actin cytoskeleton. At high concentrations, profilin prevents the polymerization of actin, whereas it enhances it at low concentrations. At low concentrations, associates with the poly-proline motif of formins to enhance actin filament elongation rate. Acts redundantly with PRF4 to regulate apical actin polymerization at the tip of pollen tube and control polarized pollen tube growth. Functions probably by favoring formin-mediated actin polymerization at pollen tube tips. This chain is Profilin-5, found in Arabidopsis thaliana (Mouse-ear cress).